Here is a 123-residue protein sequence, read N- to C-terminus: Small ribosomal subunit protein uS13 (123 aa).

The tract at residues 97-123 (PVRGQRTHTNAKTRKGRSKLPVAAKKK) is disordered.

Belongs to the universal ribosomal protein uS13 family. Part of the 30S ribosomal subunit. Forms a loose heterodimer with protein S19. Forms two bridges to the 50S subunit in the 70S ribosome.

In terms of biological role, located at the top of the head of the 30S subunit, it contacts several helices of the 16S rRNA. In the 70S ribosome it contacts the 23S rRNA (bridge B1a) and protein L5 of the 50S subunit (bridge B1b), connecting the 2 subunits; these bridges are implicated in subunit movement. Contacts the tRNAs in the A and P-sites. This is Small ribosomal subunit protein uS13 from Ehrlichia chaffeensis (strain ATCC CRL-10679 / Arkansas).